The sequence spans 291 residues: Methionine aminopeptidase (291 aa).

His65 serves as a coordination point for substrate. Residues Asp85, Asp96, and His155 each contribute to the a divalent metal cation site. His163 lines the substrate pocket. 2 residues coordinate a divalent metal cation: Glu188 and Glu276.

The protein belongs to the peptidase M24A family. Methionine aminopeptidase archaeal type 2 subfamily. Monomer. Co(2+) serves as cofactor. The cofactor is Zn(2+). Requires Mn(2+) as cofactor. It depends on Fe(2+) as a cofactor.

It catalyses the reaction Release of N-terminal amino acids, preferentially methionine, from peptides and arylamides.. Functionally, removes the N-terminal methionine from nascent proteins. The N-terminal methionine is often cleaved when the second residue in the primary sequence is small and uncharged (Met-Ala-, Cys, Gly, Pro, Ser, Thr, or Val). In Archaeoglobus fulgidus (strain ATCC 49558 / DSM 4304 / JCM 9628 / NBRC 100126 / VC-16), this protein is Methionine aminopeptidase.